We begin with the raw amino-acid sequence, 372 residues long: Serine proteinase inhibitor 1 (372 aa).

The protein belongs to the serpin family. Poxviruses subfamily.

The protein localises to the host cytoplasm. In terms of biological role, plays a role in mediating viral host range. May act to inhibit a caspase independent form of apoptosis to allow efficient virus replication in infected cells. The sequence is that of Serine proteinase inhibitor 1 (OPG208) from Homo sapiens (Human).